A 434-amino-acid chain; its full sequence is 3-phosphoshikimate 1-carboxyvinyltransferase (434 aa).

Residues Lys22, Ser23, and Arg27 each contribute to the 3-phosphoshikimate site. Lys22 is a phosphoenolpyruvate binding site. Residues Gly93 and Arg121 each contribute to the phosphoenolpyruvate site. Ser168, Ser169, Gln170, Ser199, Asp320, and Lys347 together coordinate 3-phosphoshikimate. Gln170 contributes to the phosphoenolpyruvate binding site. Asp320 serves as the catalytic Proton acceptor. Phosphoenolpyruvate-binding residues include Arg351, Arg394, and Lys419.

Belongs to the EPSP synthase family. As to quaternary structure, monomer.

It is found in the cytoplasm. It catalyses the reaction 3-phosphoshikimate + phosphoenolpyruvate = 5-O-(1-carboxyvinyl)-3-phosphoshikimate + phosphate. It participates in metabolic intermediate biosynthesis; chorismate biosynthesis; chorismate from D-erythrose 4-phosphate and phosphoenolpyruvate: step 6/7. Its function is as follows. Catalyzes the transfer of the enolpyruvyl moiety of phosphoenolpyruvate (PEP) to the 5-hydroxyl of shikimate-3-phosphate (S3P) to produce enolpyruvyl shikimate-3-phosphate and inorganic phosphate. This Burkholderia vietnamiensis (strain G4 / LMG 22486) (Burkholderia cepacia (strain R1808)) protein is 3-phosphoshikimate 1-carboxyvinyltransferase.